The following is a 162-amino-acid chain: Phosphopantetheine adenylyltransferase (162 aa).

Residue T9 participates in substrate binding. ATP is bound by residues 9–10 and H17; that span reads TF. 3 residues coordinate substrate: K41, L77, and R91. ATP-binding positions include 92 to 94, E102, and 127 to 133; these read GLR and RQAIASK.

The protein belongs to the bacterial CoaD family. In terms of assembly, homohexamer. Mg(2+) serves as cofactor.

It localises to the cytoplasm. It carries out the reaction (R)-4'-phosphopantetheine + ATP + H(+) = 3'-dephospho-CoA + diphosphate. It functions in the pathway cofactor biosynthesis; coenzyme A biosynthesis; CoA from (R)-pantothenate: step 4/5. Reversibly transfers an adenylyl group from ATP to 4'-phosphopantetheine, yielding dephospho-CoA (dPCoA) and pyrophosphate. The chain is Phosphopantetheine adenylyltransferase from Cereibacter sphaeroides (strain ATCC 17029 / ATH 2.4.9) (Rhodobacter sphaeroides).